The sequence spans 174 residues: Gamma-crystallin F (174 aa).

Beta/gamma crystallin 'Greek key' domains follow at residues Gly2–Ser40 and Gly41–Pro83. Positions His84–Ser87 are connecting peptide. Beta/gamma crystallin 'Greek key' domains are found at residues His88–Glu128 and Gly129–Met171.

Belongs to the beta/gamma-crystallin family.

Its function is as follows. Crystallins are the dominant structural components of the vertebrate eye lens. The chain is Gamma-crystallin F (Crygf) from Rattus norvegicus (Rat).